A 489-amino-acid chain; its full sequence is RNA polymerase II subunit 5-mediating protein homolog (489 aa).

4 disordered regions span residues 141–188 (NSDE…MDEE), 200–329 (EEKE…EEDE), 396–415 (ILKT…SYNE), and 434–489 (FENQ…RQNK). Residues 157 to 168 (QKSTTTTTTTTT) show a composition bias toward low complexity. Composition is skewed to basic and acidic residues over residues 169-188 (SKDK…MDEE) and 215-224 (FNKKFNKKLD). 3 stretches are compositionally biased toward acidic residues: residues 227–265 (GSDE…EDEK), 276–298 (EEDD…EYYD), and 315–329 (QGDD…EEDE). The segment covering 396–413 (ILKTNSSGNLMSTIPKSY) has biased composition (polar residues). The segment covering 480 to 489 (SRFKSSRQNK) has biased composition (basic residues).

This sequence belongs to the RNA polymerase II subunit 5-mediating protein family.

It is found in the nucleus. This Dictyostelium discoideum (Social amoeba) protein is RNA polymerase II subunit 5-mediating protein homolog (rmp).